The primary structure comprises 209 residues: Vacuolar protein sorting-associated protein 28 homolog (209 aa).

The region spanning 1–105 (MSQNSNLMRE…REGRPITVKD (105 aa)) is the VPS28 N-terminal domain. A VPS28 C-terminal domain is found at 109–205 (NVLKHIASIV…AYQSFQKALN (97 aa)).

It belongs to the VPS28 family. In terms of assembly, component of the ESCRT-I complex (endosomal sorting complex required for transport I).

Its subcellular location is the endosome. Functionally, component of the ESCRT-I complex, a regulator of vesicular trafficking process. The sequence is that of Vacuolar protein sorting-associated protein 28 homolog from Caenorhabditis briggsae.